The following is a 2164-amino-acid chain: Hemagglutinin A (2164 aa).

The N-terminal stretch at 1-25 is a signal peptide; that stretch reads MRKLNSLFSLAVLLSLLCWGQTAAA. 3 peptidase C25-like regions span residues 26-539, 540-991, and 992-1443; these read QGGP…TPPP, GGSS…TPPP, and GGTS…TPPP. 2 disordered regions span residues 493 to 512 and 520 to 541; these read WDAP…LSES and SWKT…PPGG. A compositionally biased stretch (low complexity) spans 496–508; sequence PNGTPNPNPGTTT.

This sequence belongs to the peptidase C25 family.

In terms of biological role, agglutinates erythrocytes. The chain is Hemagglutinin A (hagA) from Porphyromonas gingivalis (strain ATCC BAA-308 / W83).